Consider the following 297-residue polypeptide: Internalin C (297 aa).

The first 34 residues, M1 to A34, serve as a signal peptide directing secretion. LRR repeat units follow at residues L74 to F96, T97 to K120, E122 to S139, A140 to L161, K162 to S184, and L186 to K207.

It belongs to the internalin family. Interacts in vitro with human intestinal mucin-2 (MUC2) but not with mucin-1; binding is slightly better at pH 5.5, (the pH of the intestine) than at pH 7.4. Interacts with the SH3 6 domain of human DNMBP (Tuba). Interacts with I-kappa-B kinase alpha (IKKA, CHUK).

Its subcellular location is the secreted. It localises to the host cytoplasm. A virulence enhancer that has at least 2 dissociable functions in infection; it impairs translocation of host transcription factor NF-kappa-B to the nucleus and antagonizes the function of the Tuba dynamin-binding protein, promoting bacterial spreading. Perturbs the morphology of host cell junctions by impairing host DNMBP (Tuba) and WASL interaction, altering cortical tension at the cell junctions and allowing bacteria to more efficiently form bacteria-filled cell protrusions which promote bacterial spreading within infected host tissue. Down-regulates the host inflammation response usually induced by Listeria infection. Interacts with host I-kappa-B kinase alpha (IKKA, CHUK), which prevents IKKA from phosphorylating NF-kappa-B inhibitor alpha (IKBA, NFKBIA) and thus delays degradation of phospho-IKBA. Translocation of host transcription factor p65 (a subunit of NF-kappa-B, RELA) into the nucleus is impaired, which prevents activation of NF-KB-regulated genes. Recognized by serum from healthy humans exposed to L.monocytogenes as well from patients who have recovered from listeriosis. In Listeria monocytogenes serotype 1/2a (strain EGD / Mackaness), this protein is Internalin C.